The following is a 64-amino-acid chain: UPF0434 protein Oant_3286 (64 aa).

This sequence belongs to the UPF0434 family.

In Brucella anthropi (strain ATCC 49188 / DSM 6882 / CCUG 24695 / JCM 21032 / LMG 3331 / NBRC 15819 / NCTC 12168 / Alc 37) (Ochrobactrum anthropi), this protein is UPF0434 protein Oant_3286.